Here is a 550-residue protein sequence, read N- to C-terminus: Palmitoyltransferase PFA3 (550 aa).

Topologically, residues 1 to 21 (MASARRWARKAERCCCTFATY) are cytoplasmic. A helical transmembrane segment spans residues 22–42 (FPLAFVYGLTSWAVWVVVNIG). At 43-56 (SVSTKSSWIGTGSS) the chain is on the extracellular side. Residues 57-77 (IVGVALYVMLNWCYTTAVFTP) form a helical membrane-spanning segment. Topologically, residues 78-153 (PGSTTNDMGY…ATCIGLRNHK (76 aa)) are cytoplasmic. The region spanning 110–160 (RFCKKCQARKPDRAHHCSTCRRCVLKMDHHCPWLATCIGLRNHKAFLLFLI) is the DHHC domain. The chain crosses the membrane as a helical span at residues 154–174 (AFLLFLIYTSLFCFWSFAVSA). Residues 175 to 190 (CWVWYEALNDQEYIDS) are Extracellular-facing. A helical membrane pass occupies residues 191–211 (FLPVNFIMLSVISGIIGLVVG). Residues 212–550 (AFTSWHIHLA…TPKFQDEGVD (339 aa)) are Cytoplasmic-facing. Disordered regions lie at residues 272–304 (ITRP…AQRE), 378–422 (REQQ…PKTM), and 434–550 (NLYA…EGVD). Residues 274-285 (RPEEGEERREMP) are compositionally biased toward basic and acidic residues. A compositionally biased stretch (acidic residues) spans 457 to 470 (DELADLDTDDEDGF). Basic and acidic residues predominate over residues 491–502 (DSHRRDDAEARA). The segment covering 523–542 (GSSQSTPTRTPSNLSRSGTP) has biased composition (polar residues).

This sequence belongs to the DHHC palmitoyltransferase family. PFA3 subfamily. In terms of processing, autopalmitoylated.

It is found in the vacuole membrane. The catalysed reaction is L-cysteinyl-[protein] + hexadecanoyl-CoA = S-hexadecanoyl-L-cysteinyl-[protein] + CoA. Its function is as follows. Palmitoyltransferase specific for VAC8. Palmitoylates VAC8 at one or more of its N-terminal cysteine residues, which is required for its proper membrane localization. The sequence is that of Palmitoyltransferase PFA3 (PFA3) from Gibberella zeae (strain ATCC MYA-4620 / CBS 123657 / FGSC 9075 / NRRL 31084 / PH-1) (Wheat head blight fungus).